The primary structure comprises 386 residues: Phosphoglycerate kinase (386 aa).

Substrate is bound by residues aspartate 21–asparagine 23, arginine 36, histidine 59–arginine 62, arginine 112, and arginine 145. Residues lysine 196, glutamate 313, and glycine 339 to threonine 342 contribute to the ATP site.

Belongs to the phosphoglycerate kinase family. Monomer.

The protein localises to the cytoplasm. The catalysed reaction is (2R)-3-phosphoglycerate + ATP = (2R)-3-phospho-glyceroyl phosphate + ADP. The protein operates within carbohydrate degradation; glycolysis; pyruvate from D-glyceraldehyde 3-phosphate: step 2/5. This is Phosphoglycerate kinase from Haemophilus influenzae (strain PittEE).